The chain runs to 248 residues: MAGHSQFKNIMHRKGRQDAVRSKMFSKLAREITVAAKAGLPDPTMNARLRLAIQNAKAQSMPKDNIDRAIKKAAGADGENYDEVRYEGYGPGGTAIIVEALTDNRNRTASNVRSIFTKAGGALGETGSVSFSFDHVGEITYKLAAGDADKVMEAAIEAGADDVETDEEGHYITCAFEALGEVSKALEASLGEAETVKAVWRAQNNVPVDEEKAQSLMKLIDSLEDDDDVQNVYSNFEVSEEVLAKLSA.

Belongs to the TACO1 family.

It is found in the cytoplasm. The chain is Probable transcriptional regulatory protein RHE_CH03475 from Rhizobium etli (strain ATCC 51251 / DSM 11541 / JCM 21823 / NBRC 15573 / CFN 42).